The primary structure comprises 192 residues: Lumican (192 aa).

9 LRR repeats span residues 1–23 (LQWL…VFSK), 26–46 (QLKK…PLPK), 47–68 (SLED…DGLL), 69–90 (NLTF…AAFK), 94–114 (SLEY…GLPA), 115–136 (SLLT…YFKR), 139–162 (GLQY…SFNI), 164–185 (SLVE…NENL), and 186–192 (ENYYLEV).

This sequence belongs to the small leucine-rich proteoglycan (SLRP) family. SLRP class II subfamily. Binds to laminin. Sulfated on tyrosine residue(s). In terms of processing, contains keratan sulfate.

The protein resides in the secreted. It localises to the extracellular space. The protein localises to the extracellular matrix. The sequence is that of Lumican (LUM) from Oryctolagus cuniculus (Rabbit).